A 745-amino-acid chain; its full sequence is Ribosomal protein S6 kinase alpha-6 (745 aa).

The disordered stretch occupies residues 1–28 (MLPFAPQDEPWDREMEVFSGGGASSGEV). Positions 73–330 (FELLKVLGQG…VEEIKRHLFF (258 aa)) constitute a Protein kinase 1 domain. ATP-binding positions include 79-87 (LGQGSFGKV) and lysine 105. Residue aspartate 198 is the Proton acceptor of the active site. A phosphoserine mark is found at serine 232, serine 372, and serine 389. The region spanning 331–400 (ANIDWDKLYK…VATSIAEEYK (70 aa)) is the AGC-kinase C-terminal domain. The Protein kinase 2 domain occupies 426-683 (YELKEDIGVG…AEQILKHSWI (258 aa)). Residues 432–440 (IGVGSYSVC) and lysine 455 each bind ATP. The active-site Proton acceptor is the aspartate 543. Threonine 581 is modified (phosphothreonine).

It belongs to the protein kinase superfamily. AGC Ser/Thr protein kinase family. S6 kinase subfamily. Forms a complex with MAPK3/ERK1 but not with MAPK9 or MAPK14 in serum-starved cells. The cofactor is Mg(2+). In terms of processing, phosphorylated at Ser-232, Ser-372, and Ser-389 in serum-starved cells.

It is found in the cytoplasm. The protein localises to the cytosol. Its subcellular location is the nucleus. The catalysed reaction is L-seryl-[protein] + ATP = O-phospho-L-seryl-[protein] + ADP + H(+). It carries out the reaction L-threonyl-[protein] + ATP = O-phospho-L-threonyl-[protein] + ADP + H(+). Constitutively activated by phosphorylation at Ser-232, Ser-372, and Ser-389 in serum-starved cells. Does not require growth factor stimulation for significant kinase activity. In terms of biological role, constitutively active serine/threonine-protein kinase that exhibits growth-factor-independent kinase activity and that may participate in p53/TP53-dependent cell growth arrest signaling and play an inhibitory role during embryogenesis. This Homo sapiens (Human) protein is Ribosomal protein S6 kinase alpha-6 (RPS6KA6).